Here is a 396-residue protein sequence, read N- to C-terminus: Phosphoglycerate kinase (396 aa).

Substrate is bound by residues 21–23 (DFN), Arg-36, 59–62 (HLGK), Arg-119, and Arg-156. ATP contacts are provided by residues Lys-206, Gly-294, Glu-325, and 352–355 (GGDS).

This sequence belongs to the phosphoglycerate kinase family. As to quaternary structure, monomer.

The protein localises to the cytoplasm. The enzyme catalyses (2R)-3-phosphoglycerate + ATP = (2R)-3-phospho-glyceroyl phosphate + ADP. The protein operates within carbohydrate degradation; glycolysis; pyruvate from D-glyceraldehyde 3-phosphate: step 2/5. The sequence is that of Phosphoglycerate kinase from Listeria welshimeri serovar 6b (strain ATCC 35897 / DSM 20650 / CCUG 15529 / CIP 8149 / NCTC 11857 / SLCC 5334 / V8).